Here is a 93-residue protein sequence, read N- to C-terminus: Small ribosomal subunit protein uS19 (93 aa).

Belongs to the universal ribosomal protein uS19 family.

Protein S19 forms a complex with S13 that binds strongly to the 16S ribosomal RNA. The chain is Small ribosomal subunit protein uS19 from Synechococcus sp. (strain JA-3-3Ab) (Cyanobacteria bacterium Yellowstone A-Prime).